A 357-amino-acid chain; its full sequence is Neutral protease 2 homolog BDCG_00922 (357 aa).

An N-terminal signal peptide occupies residues 1-19 (MRSPQSILAIVAFATTAIA). Residues 20–182 (GVVPSTEKRA…FASLNQFSKR (163 aa)) constitute a propeptide that is removed on maturation. 3 disulfide bridges follow: Cys-188/Cys-259, Cys-266/Cys-284, and Cys-297/Cys-357. A Zn(2+)-binding site is contributed by His-308. Glu-309 is a catalytic residue. Residues His-312 and Asp-323 each contribute to the Zn(2+) site.

Belongs to the peptidase M35 family. Requires Zn(2+) as cofactor.

It localises to the secreted. The enzyme catalyses Preferential cleavage of bonds with hydrophobic residues in P1'. Also 3-Asn-|-Gln-4 and 8-Gly-|-Ser-9 bonds in insulin B chain.. Functionally, secreted metalloproteinase that allows assimilation of proteinaceous substrates. Shows high activities on basic nuclear substrates such as histone and protamine. The sequence is that of Neutral protease 2 homolog BDCG_00922 from Ajellomyces dermatitidis (strain ER-3 / ATCC MYA-2586) (Blastomyces dermatitidis).